We begin with the raw amino-acid sequence, 266 residues long: N-acetylneuraminate lyase B (266 aa).

Aceneuramate-binding residues include Thr51 and Thr52. The Proton donor role is filled by Tyr143. Catalysis depends on Lys173, which acts as the Schiff-base intermediate with substrate. Residues Ser175, Gly197, Asp199, Glu200, and Ser216 each contribute to the aceneuramate site.

Belongs to the DapA family. NanA subfamily. In terms of assembly, homotetramer.

It is found in the cytoplasm. The enzyme catalyses aceneuramate = aldehydo-N-acetyl-D-mannosamine + pyruvate. It participates in amino-sugar metabolism; N-acetylneuraminate degradation. Functionally, catalyzes the cleavage of N-acetylneuraminic acid (sialic acid) to form pyruvate and N-acetylmannosamine via a Schiff base intermediate. It prevents sialic acids from being recycled and returning to the cell surface. Involved in the N-glycolylneuraminic acid (Neu5Gc) degradation pathway. This chain is N-acetylneuraminate lyase B (npl-b), found in Xenopus laevis (African clawed frog).